We begin with the raw amino-acid sequence, 181 residues long: 6,7-dimethyl-8-ribityllumazine synthase (181 aa).

5-amino-6-(D-ribitylamino)uracil contacts are provided by residues Phe23, 61 to 63 (SFE), and 85 to 87 (AVI). 90–91 (QT) is a binding site for (2S)-2-hydroxy-3-oxobutyl phosphate. His93 functions as the Proton donor in the catalytic mechanism. A 5-amino-6-(D-ribitylamino)uracil-binding site is contributed by Phe118. Arg132 is a (2S)-2-hydroxy-3-oxobutyl phosphate binding site.

Belongs to the DMRL synthase family.

The catalysed reaction is (2S)-2-hydroxy-3-oxobutyl phosphate + 5-amino-6-(D-ribitylamino)uracil = 6,7-dimethyl-8-(1-D-ribityl)lumazine + phosphate + 2 H2O + H(+). Its pathway is cofactor biosynthesis; riboflavin biosynthesis; riboflavin from 2-hydroxy-3-oxobutyl phosphate and 5-amino-6-(D-ribitylamino)uracil: step 1/2. In terms of biological role, catalyzes the formation of 6,7-dimethyl-8-ribityllumazine by condensation of 5-amino-6-(D-ribitylamino)uracil with 3,4-dihydroxy-2-butanone 4-phosphate. This is the penultimate step in the biosynthesis of riboflavin. This chain is 6,7-dimethyl-8-ribityllumazine synthase, found in Synechococcus elongatus (strain ATCC 33912 / PCC 7942 / FACHB-805) (Anacystis nidulans R2).